The primary structure comprises 423 residues: UDP-N-acetylglucosamine 1-carboxyvinyltransferase 2 (423 aa).

23–24 provides a ligand contact to phosphoenolpyruvate; it reads KN. Arg95 serves as a coordination point for UDP-N-acetyl-alpha-D-glucosamine. Cys119 acts as the Proton donor in catalysis. Cys119 carries the 2-(S-cysteinyl)pyruvic acid O-phosphothioketal modification. 2 residues coordinate UDP-N-acetyl-alpha-D-glucosamine: Asp306 and Ile328.

This sequence belongs to the EPSP synthase family. MurA subfamily.

The protein localises to the cytoplasm. The enzyme catalyses phosphoenolpyruvate + UDP-N-acetyl-alpha-D-glucosamine = UDP-N-acetyl-3-O-(1-carboxyvinyl)-alpha-D-glucosamine + phosphate. The protein operates within cell wall biogenesis; peptidoglycan biosynthesis. In terms of biological role, cell wall formation. Adds enolpyruvyl to UDP-N-acetylglucosamine. This chain is UDP-N-acetylglucosamine 1-carboxyvinyltransferase 2, found in Symbiobacterium thermophilum (strain DSM 24528 / JCM 14929 / IAM 14863 / T).